The sequence spans 455 residues: tRNA modification GTPase MnmE (455 aa).

(6S)-5-formyl-5,6,7,8-tetrahydrofolate is bound by residues Arg24, Glu81, and Lys120. The 163-residue stretch at 216-378 folds into the TrmE-type G domain; the sequence is GMTVVIAGRP…LREHLKACMG (163 aa). Asn226 is a K(+) binding site. Residues 226–231, 245–251, 270–273, 335–338, and 359–361 contribute to the GTP site; these read NAGKSS, TDIAGTT, DTAG, NKAD, and SAR. Mg(2+) is bound at residue Ser230. K(+)-binding residues include Thr245, Ile247, and Thr250. Residue Thr251 coordinates Mg(2+). Lys455 serves as a coordination point for (6S)-5-formyl-5,6,7,8-tetrahydrofolate.

This sequence belongs to the TRAFAC class TrmE-Era-EngA-EngB-Septin-like GTPase superfamily. TrmE GTPase family. In terms of assembly, homodimer. Heterotetramer of two MnmE and two MnmG subunits. It depends on K(+) as a cofactor.

The protein resides in the cytoplasm. Functionally, exhibits a very high intrinsic GTPase hydrolysis rate. Involved in the addition of a carboxymethylaminomethyl (cmnm) group at the wobble position (U34) of certain tRNAs, forming tRNA-cmnm(5)s(2)U34. This is tRNA modification GTPase MnmE from Pseudomonas aeruginosa (strain ATCC 15692 / DSM 22644 / CIP 104116 / JCM 14847 / LMG 12228 / 1C / PRS 101 / PAO1).